We begin with the raw amino-acid sequence, 227 residues long: PKHD-type hydroxylase Dtpsy_0528 (227 aa).

The 101-residue stretch at 78-178 (TIYPPKFNRY…RVASFFWIES (101 aa)) folds into the Fe2OG dioxygenase domain. Positions 96, 98, and 159 each coordinate Fe cation. Arg169 provides a ligand contact to 2-oxoglutarate.

Fe(2+) is required as a cofactor. Requires L-ascorbate as cofactor.

This Acidovorax ebreus (strain TPSY) (Diaphorobacter sp. (strain TPSY)) protein is PKHD-type hydroxylase Dtpsy_0528.